A 409-amino-acid polypeptide reads, in one-letter code: Pyrophosphate--fructose 6-phosphate 1-phosphotransferase (409 aa).

Gly14 is a binding site for diphosphate. Asp123 is a Mg(2+) binding site. Substrate-binding positions include 151-153 (TID), 196-198 (MGR), Glu268, and 325-328 (YFAR). The active-site Proton acceptor is the Asp153.

It belongs to the phosphofructokinase type A (PFKA) family. PPi-dependent PFK group II subfamily. Clade 'P' sub-subfamily. As to quaternary structure, homotetramer. The cofactor is Mg(2+).

It is found in the cytoplasm. It catalyses the reaction beta-D-fructose 6-phosphate + diphosphate = beta-D-fructose 1,6-bisphosphate + phosphate + H(+). The protein operates within carbohydrate degradation; glycolysis; D-glyceraldehyde 3-phosphate and glycerone phosphate from D-glucose: step 3/4. With respect to regulation, non-allosteric. Its function is as follows. Catalyzes the phosphorylation of D-fructose 6-phosphate, the first committing step of glycolysis. Uses inorganic phosphate (PPi) as phosphoryl donor instead of ATP like common ATP-dependent phosphofructokinases (ATP-PFKs), which renders the reaction reversible, and can thus function both in glycolysis and gluconeogenesis. Consistently, PPi-PFK can replace the enzymes of both the forward (ATP-PFK) and reverse (fructose-bisphosphatase (FBPase)) reactions. The chain is Pyrophosphate--fructose 6-phosphate 1-phosphotransferase from Methylotuvimicrobium alcaliphilum (strain DSM 19304 / NCIMB 14124 / VKM B-2133 / 20Z) (Methylomicrobium alcaliphilum).